Consider the following 63-residue polypeptide: Cysteine-rich peptide clone 2 (63 aa).

The signal sequence occupies residues 1–23; it reads MHFSGVVLILLSMTLVNFVFVET. 3 cysteine pairs are disulfide-bonded: Cys33/Cys53, Cys38/Cys58, and Cys42/Cys60.

Expressed by the venom gland.

It localises to the secreted. This chain is Cysteine-rich peptide clone 2, found in Tityus costatus (Brazilian scorpion).